A 354-amino-acid chain; its full sequence is Protein-glutamate methylesterase/protein-glutamine glutaminase 2 (354 aa).

The Response regulatory domain occupies 3–120 (RVVVVDDSMS…PADLADYARD (118 aa)). D54 is subject to 4-aspartylphosphate. The region spanning 164–354 (ATRLSRVIAI…MGARLSEALQ (191 aa)) is the CheB-type methylesterase domain. Active-site residues include S176, H202, and D298.

The protein belongs to the CheB family. In terms of processing, phosphorylated by CheA. Phosphorylation of the N-terminal regulatory domain activates the methylesterase activity.

The protein resides in the cytoplasm. It carries out the reaction [protein]-L-glutamate 5-O-methyl ester + H2O = L-glutamyl-[protein] + methanol + H(+). It catalyses the reaction L-glutaminyl-[protein] + H2O = L-glutamyl-[protein] + NH4(+). Its function is as follows. Involved in chemotaxis. Part of a chemotaxis signal transduction system that modulates chemotaxis in response to various stimuli. Catalyzes the demethylation of specific methylglutamate residues introduced into the chemoreceptors (methyl-accepting chemotaxis proteins or MCP) by CheR. Also mediates the irreversible deamidation of specific glutamine residues to glutamic acid. In Burkholderia thailandensis (strain ATCC 700388 / DSM 13276 / CCUG 48851 / CIP 106301 / E264), this protein is Protein-glutamate methylesterase/protein-glutamine glutaminase 2.